A 288-amino-acid polypeptide reads, in one-letter code: Lipoyl synthase (288 aa).

Residues Cys-42, Cys-47, Cys-53, Cys-68, Cys-72, Cys-75, and Ser-280 each coordinate [4Fe-4S] cluster. Residues 54–269 enclose the Radical SAM core domain; the sequence is WGEGTATFMI…EKYGIELGFR (216 aa).

It belongs to the radical SAM superfamily. Lipoyl synthase family. The cofactor is [4Fe-4S] cluster.

It localises to the cytoplasm. It carries out the reaction [[Fe-S] cluster scaffold protein carrying a second [4Fe-4S](2+) cluster] + N(6)-octanoyl-L-lysyl-[protein] + 2 oxidized [2Fe-2S]-[ferredoxin] + 2 S-adenosyl-L-methionine + 4 H(+) = [[Fe-S] cluster scaffold protein] + N(6)-[(R)-dihydrolipoyl]-L-lysyl-[protein] + 4 Fe(3+) + 2 hydrogen sulfide + 2 5'-deoxyadenosine + 2 L-methionine + 2 reduced [2Fe-2S]-[ferredoxin]. Its pathway is protein modification; protein lipoylation via endogenous pathway; protein N(6)-(lipoyl)lysine from octanoyl-[acyl-carrier-protein]: step 2/2. In terms of biological role, catalyzes the radical-mediated insertion of two sulfur atoms into the C-6 and C-8 positions of the octanoyl moiety bound to the lipoyl domains of lipoate-dependent enzymes, thereby converting the octanoylated domains into lipoylated derivatives. The chain is Lipoyl synthase from Flavobacterium johnsoniae (strain ATCC 17061 / DSM 2064 / JCM 8514 / BCRC 14874 / CCUG 350202 / NBRC 14942 / NCIMB 11054 / UW101) (Cytophaga johnsonae).